Consider the following 193-residue polypeptide: Cyanate hydratase (193 aa).

Residues R121, E124, and S147 contribute to the active site.

Belongs to the cyanase family.

It carries out the reaction cyanate + hydrogencarbonate + 3 H(+) = NH4(+) + 2 CO2. Catalyzes the reaction of cyanate with bicarbonate to produce ammonia and carbon dioxide. The sequence is that of Cyanate hydratase from Phaeodactylum tricornutum (strain CCAP 1055/1).